The chain runs to 702 residues: SAGA complex subunit NGG1 (702 aa).

A compositionally biased stretch (basic residues) spans 1–10 (MPRHGRRGKL). 2 disordered regions span residues 1-29 (MPRH…PSKL) and 90-224 (LRKI…VKNP). 2 stretches are compositionally biased toward basic and acidic residues: residues 11–22 (PKGEKLPKKEGG) and 90–108 (LRKI…EKQE). Over residues 109-125 (TSNADGQHESSTATEET) the composition is skewed to polar residues. Position 134 is a phosphoserine (serine 134). A compositionally biased stretch (basic and acidic residues) spans 162-219 (MAKEEINEDKDLQVHRDQPREKRPFDSETENRATENENTQRPDNKKQKIDVDKMENDP). Serine 407 bears the Phosphoserine mark. Threonine 464 is subject to Phosphothreonine. The Nuclear localization signal motif lies at 606–618 (KRIRVPKKRKKHH). 2 disordered regions span residues 611-636 (PKKR…IAQQ) and 672-702 (NESV…VELN). Over residues 620–636 (AASNNVNTGTTSQIAQQ) the composition is skewed to polar residues. Positions 680 to 689 (DQEEDEDEAD) are enriched in acidic residues.

Belongs to the NGG1 family. In terms of assembly, component of the 1.8 MDa SAGA (Spt-Ada-Gcn5 acetyltransferase) complex, which is composed of 19 subunits TRA1, SPT7, TAF5, NGG1/ADA3, SGF73, SPT20/ADA5, SPT8, TAF12, TAF6, HFI1/ADA1, UBP8, GCN5, ADA2, SPT3, SGF29, TAF10, TAF9, SGF11 and SUS1. The SAGA complex is composed of 4 modules, namely the HAT (histone acetyltransferase) module (GCN5, ADA2, NGG1/ADA3 and SGF29), the DUB (deubiquitinating) module (UBP8, SGF11, SGF73 and SUS1), the core or TAF (TBP-associated factor) module (TAF5, TAF6, TAF9, TAF10 and TAF12), and the Tra1 or SPT (Suppressor of Ty) module (TRA1, HFI1/ADA1, SPT3, SPT7, SPT8 and SPT20/ADA5). The Tra1/SPT module binds activators, the core module recruits TBP (TATA-binding protein), the HAT module contains the histone H3 acetyltransferase GCN5, and the DUB module comprises the histone H2B deubiquitinase UBP8. Also identified in an altered form of SAGA, named SALSA (SAGA altered, Spt8 absent) or SLIK (SAGA-like) complex, which contains a C-terminal truncated form of SPT7 and is missing SPT8. However, it has been shown that the SAGA and SAGA-like SALSA/SLIK transcriptional coactivators are structurally and biochemically equivalent. Component of the 0.8 MDa ADA complex, a HAT complex distinct from SAGA, which at least consists of ADA2, NGG1/ADA3, AHC1, AHC2, SGF29 and GCN5. Identified in an Ada.spt complex with SPT7 and TRA1. Component of an ADA/GCN5 complex that consists of HFI1/ADA1, ADA2, NGG1/ADA3, SPT20/ADA5 and GCN5 and probably is a subcomplex of SAGA.

It localises to the nucleus. Component of the transcription coactivator SAGA complex. SAGA acts as a general cofactor required for essentially all RNA polymerase II transcription. At the promoters, SAGA is required for transcription pre-initiation complex (PIC) recruitment. It influences RNA polymerase II transcriptional activity through different activities such as TBP interaction (via core/TAF module) and promoter selectivity, interaction with transcription activators (via Tra1/SPT module), and chromatin modification through histone acetylation (via HAT module) and deubiquitination (via DUB module). SAGA preferentially acetylates histones H3 (to form H3K9ac, H3K14ac, H3K18ac and H3K23ac) and H2B and deubiquitinates histone H2B. SAGA interacts with DNA via upstream activating sequences (UASs). Also identified in a modified version of SAGA named SALSA or SLIK. The cleavage of SPT7 and the absence of the SPT8 subunit in SLIK neither drive any major conformational differences in its structure compared with SAGA, nor significantly affect HAT, DUB, or DNA-binding activities. Component of the ADA histone acetyltransferase complex, which preferentially acetylates nucleosomal histones H3 (to form H3K14ac and H3K18ac) and H2B. May be involved in response to DNA damage by genotoxic agents. This Saccharomyces cerevisiae (strain ATCC 204508 / S288c) (Baker's yeast) protein is SAGA complex subunit NGG1 (NGG1).